Reading from the N-terminus, the 935-residue chain is Pre-mRNA-splicing factor CWC22 homolog (935 aa).

The tract at residues 1–179 (MSRSPSPDSP…PKDLLRTRTG (179 aa)) is disordered. Composition is skewed to basic and acidic residues over residues 13-25 (VRDD…REQS) and 49-70 (ESSR…DEKM). Over residues 84-148 (QHRRHRESRS…RSPARRRSPV (65 aa)) the composition is skewed to basic residues. Residues 159–175 (PTEEPEKKKNDPKDLLR) show a composition bias toward basic and acidic residues. Positions 212–400 (KKKIHGLVNR…ETAMQIRKDK (189 aa)) constitute an MIF4G domain. The tract at residues 463–489 (ADISSDEEEEVEDDDEESEAEEAPRKT) is disordered. Residues 465 to 483 (ISSDEEEEVEDDDEESEAE) show a composition bias toward acidic residues. The region spanning 502-633 (AFRREVYLTL…EWKILADVKM (132 aa)) is the MI domain. The segment at 725–935 (KAAQSSSDSS…VGSDDRRRRH (211 aa)) is disordered. The span at 729 to 763 (SSSDSSSDSSDSSDSSDSSGSSDSSDDSSSSSSSD) shows a compositional bias: low complexity. 2 stretches are compositionally biased toward basic and acidic residues: residues 780-891 (KKKE…DRKE) and 897-935 (DRRD…RRRH).

It belongs to the CWC22 family.

It localises to the nucleus. The protein localises to the nucleus speckle. Its function is as follows. Required for early embryogenesis and tissue differentiation. Required for pre-mRNA splicing and for exon-junction complex (EJC) assembly. Hinders EIF4A3 from non-specifically binding RNA and escorts it to the splicing machinery to promote EJC assembly on mature mRNAs. Through its role in EJC assembly, required for nonsense-mediated mRNA decay. The sequence is that of Pre-mRNA-splicing factor CWC22 homolog from Caenorhabditis briggsae.